A 399-amino-acid chain; its full sequence is Insertion element IS900 uncharacterized 42 kDa protein (399 aa).

It belongs to the transposase IS1111A/IS1328/IS1533 family.

In Mycobacterium paratuberculosis, this protein is Insertion element IS900 uncharacterized 42 kDa protein.